An 865-amino-acid polypeptide reads, in one-letter code: DNA topoisomerase 3-beta (865 aa).

Residues 6–151 (RVLMVAEKPS…KVYRARFSSV (146 aa)) enclose the Toprim domain. Mg(2+) is bound by residues glutamate 12, aspartate 116, and aspartate 118. The 421-residue stretch at 167–587 (NRDEALAVDA…HVIQQFRRKF (421 aa)) folds into the Topo IA-type catalytic domain. The interaction with DNA stretch occupies residues 209–214 (SYGPCQ). Residue tyrosine 331 is the O-(5'-phospho-DNA)-tyrosine intermediate of the active site. Over residues 833 to 853 (RRGGRGRGRGRGRGRGGRRGS) the composition is skewed to basic residues. The segment at 833-865 (RRGGRGRGRGRGRGRGGRRGSKSVDPKMSFRDF) is disordered. A compositionally biased stretch (basic and acidic residues) spans 854–865 (KSVDPKMSFRDF).

It belongs to the type IA topoisomerase family. Mg(2+) is required as a cofactor.

The catalysed reaction is ATP-independent breakage of single-stranded DNA, followed by passage and rejoining.. Its function is as follows. Releases the supercoiling and torsional tension of DNA introduced during the DNA replication and transcription by transiently cleaving and rejoining one strand of the DNA duplex. Introduces a single-strand break via transesterification at a target site in duplex DNA. The scissile phosphodiester is attacked by the catalytic tyrosine of the enzyme, resulting in the formation of a DNA-(5'-phosphotyrosyl)-enzyme intermediate and the expulsion of a 3'-OH DNA strand. The free DNA strand than undergoes passage around the unbroken strand thus removing DNA supercoils. Finally, in the religation step, the DNA 3'-OH attacks the covalent intermediate to expel the active-site tyrosine and restore the DNA phosphodiester backbone. In Arabidopsis thaliana (Mouse-ear cress), this protein is DNA topoisomerase 3-beta.